The sequence spans 605 residues: Acetoin dehydrogenase operon transcriptional activator AcoR (605 aa).

The region spanning 295–520 (VIGQSGRSQA…LFNVFERLSI (226 aa)) is the Sigma-54 factor interaction domain. Residues 323 to 330 (GETGTGKE) and 387 to 396 (ANQGTLFLDE) contribute to the ATP site. The segment at residues 578 to 597 (VSQAAKISGIPRSTFYKRLK) is a DNA-binding region (H-T-H motif).

Acts as a transcriptional activator of the acoABCL operon encoding the acetoin dehydrogenase complex. This Bacillus subtilis (strain 168) protein is Acetoin dehydrogenase operon transcriptional activator AcoR (acoR).